The primary structure comprises 122 residues: Large ribosomal subunit protein uL14c (122 aa).

Belongs to the universal ribosomal protein uL14 family. As to quaternary structure, part of the 50S ribosomal subunit.

It localises to the plastid. Its subcellular location is the chloroplast. Functionally, binds to 23S rRNA. This Marchantia polymorpha (Common liverwort) protein is Large ribosomal subunit protein uL14c.